Here is a 528-residue protein sequence, read N- to C-terminus: MPVTMSRAILDNFLGNSPKWFKLAIISFLVINPIVFYFNPFIAGWLLVVEFIFTLAMALKCYPLQPGGLLAIEAVAIGMTSPSQVLHEIEANLEVVLLLVFMVAGIYFMKQLLLFVFTKMITKVRSKVYVSLLFCVSSAFLSAFLDALTVIAVIITVAVGFYSIYHRVASGKSFADSHDHTSDGHPQLCEEELESFRGFLRNLLMHAGVGTALGGVCTMVGEPQNLIIAAQANWQFAEFAIRMSPVTVPVFFAGVTTCFLVEKFKVFGYGQQLPEAVHKILSDYDAHEDANRTKHDKVKLLVQAFIGVWLIAGLALHLASVGLIGLSVIILATAFNGITNEHALGKAFEEALPFTALLAVFFAIVAVIIDLQLFAPVIQWALSYEGNTQLVVFYIANGLLSMVSDNVFVGTVYINEVKAALLNGQITRDQFDLLAVAINTGTNLPSVATPNGQAAFLFLLTSAIAPLIRLSYGRMVWMALPYTIVLSIVGVLAIQLGALEQMTQYFYDTQLLIHHSAQAVTDSVVSGH.

The next 10 helical transmembrane spans lie at 25 to 47 (IISF…GWLL), 66 to 86 (PGGL…SQVL), 97 to 117 (LLLV…LFVF), 130 to 164 (VSLL…FYSI), 241 to 261 (IRMS…CFLV), 304 to 324 (AFIG…VGLI), 351 to 371 (ALPF…IIDL), 390 to 410 (LVVF…VFVG), 448 to 468 (ATPN…APLI), and 476 to 496 (VWMA…AIQL).

Belongs to the NhaB Na(+)/H(+) (TC 2.A.34) antiporter family.

It localises to the cell inner membrane. It catalyses the reaction 2 Na(+)(in) + 3 H(+)(out) = 2 Na(+)(out) + 3 H(+)(in). Functionally, na(+)/H(+) antiporter that extrudes sodium in exchange for external protons. This Shewanella halifaxensis (strain HAW-EB4) protein is Na(+)/H(+) antiporter NhaB.